The chain runs to 137 residues: Small ribosomal subunit protein uS13 (137 aa).

The disordered stretch occupies residues 114–137 (VTQKNARTRKGPRKTIMAKKDKGK). Residues 119–130 (ARTRKGPRKTIM) are compositionally biased toward basic residues.

The protein belongs to the universal ribosomal protein uS13 family. In terms of assembly, part of the 30S ribosomal subunit. Forms a loose heterodimer with protein S19. Forms two bridges to the 50S subunit in the 70S ribosome.

Functionally, located at the top of the head of the 30S subunit, it contacts several helices of the 16S rRNA. In the 70S ribosome it contacts the 23S rRNA (bridge B1a) and protein L5 of the 50S subunit (bridge B1b), connecting the 2 subunits; these bridges are implicated in subunit movement. Contacts the tRNAs in the A and P-sites. This Mesomycoplasma hyopneumoniae (strain 232) (Mycoplasma hyopneumoniae) protein is Small ribosomal subunit protein uS13.